Consider the following 427-residue polypeptide: Enolase 2 (427 aa).

Gln-163 is a (2R)-2-phosphoglycerate binding site. Catalysis depends on Glu-205, which acts as the Proton donor. Mg(2+) contacts are provided by Asp-242, Glu-285, and Asp-312. Lys-337, Arg-366, Ser-367, and Lys-388 together coordinate (2R)-2-phosphoglycerate. Lys-337 functions as the Proton acceptor in the catalytic mechanism.

Belongs to the enolase family. As to quaternary structure, component of the RNA degradosome, a multiprotein complex involved in RNA processing and mRNA degradation. It depends on Mg(2+) as a cofactor.

It is found in the cytoplasm. It localises to the secreted. Its subcellular location is the cell surface. The enzyme catalyses (2R)-2-phosphoglycerate = phosphoenolpyruvate + H2O. It functions in the pathway carbohydrate degradation; glycolysis; pyruvate from D-glyceraldehyde 3-phosphate: step 4/5. Functionally, catalyzes the reversible conversion of 2-phosphoglycerate (2-PG) into phosphoenolpyruvate (PEP). It is essential for the degradation of carbohydrates via glycolysis. The sequence is that of Enolase 2 from Methylococcus capsulatus (strain ATCC 33009 / NCIMB 11132 / Bath).